Reading from the N-terminus, the 543-residue chain is MAYFFDFPTDTWVEDASPGGPPKRAFGHGLAAGSSHFASPVSRRRLPTITALLLFSLLSASQSGALSVSQCSRRVSLGPLLSRVSSVSCTPSAAASALASSLYPTDSLSSVEGSVAPRPPPSSLAFVLRRVPPAAYSSSLSPSVLRFKHSLPRPLQGSLVCAPGILGGAAGSARFAGCCGSQGRSCGSGKNPELPLKGSKDEVIPRVGTSTAGPRPDWFHVPAPQAASRGAEESRYQQLQKQIRGLDLHTVCEEAKCPNIGECWNGGTATLILLGDTCTRGCRFCAIKTSSKPPPPDPLEPEKVADAVAKWDIDYVVMTSVDRDDMPDGGAGHFARTVQLVKKAKPSMLIECLVSDFQGMEESVRTLAQSGLDVYAHNIETVRRLTPYVRDKRAKYDQSLRVLHLAKQFNPSLFTKSSIMLGLGETSEEVVRTLRDLRDHDVDVVTLGQYLRPTKQQLGVVEYVTPETFKKYQDIAEEMGFKYVASGPLVRSSYKAGEYYMKHLIDDARKHGRRETVKQVKLEADVGTLKGTTTTFQVNEKEA.

The N-terminal stretch at 1-63 is a signal peptide; the sequence is MAYFFDFPTD…LFSLLSASQS (63 aa). Residues Cys-252, Cys-257, Cys-263, Cys-278, Cys-282, Cys-285, and Ser-493 each coordinate [4Fe-4S] cluster. The Radical SAM core domain occupies 264 to 482; the sequence is WNGGTATLIL…QDIAEEMGFK (219 aa).

It belongs to the radical SAM superfamily. Lipoyl synthase family. Requires [4Fe-4S] cluster as cofactor.

It is found in the plastid. The protein resides in the apicoplast. The enzyme catalyses [[Fe-S] cluster scaffold protein carrying a second [4Fe-4S](2+) cluster] + N(6)-octanoyl-L-lysyl-[protein] + 2 oxidized [2Fe-2S]-[ferredoxin] + 2 S-adenosyl-L-methionine + 4 H(+) = [[Fe-S] cluster scaffold protein] + N(6)-[(R)-dihydrolipoyl]-L-lysyl-[protein] + 4 Fe(3+) + 2 hydrogen sulfide + 2 5'-deoxyadenosine + 2 L-methionine + 2 reduced [2Fe-2S]-[ferredoxin]. The protein operates within protein modification; protein lipoylation via endogenous pathway; protein N(6)-(lipoyl)lysine from octanoyl-[acyl-carrier-protein]: step 2/2. Catalyzes the radical-mediated insertion of two sulfur atoms into the C-6 and C-8 positions of the octanoyl moiety bound to the lipoyl domains of lipoate-dependent enzymes, thereby converting the octanoylated domains into lipoylated derivatives. This is Lipoyl synthase, apicoplast from Toxoplasma gondii.